Consider the following 469-residue polypeptide: 3-isopropylmalate dehydratase large subunit (469 aa).

Cys347, Cys407, and Cys410 together coordinate [4Fe-4S] cluster.

Belongs to the aconitase/IPM isomerase family. LeuC type 1 subfamily. In terms of assembly, heterodimer of LeuC and LeuD. [4Fe-4S] cluster is required as a cofactor.

It catalyses the reaction (2R,3S)-3-isopropylmalate = (2S)-2-isopropylmalate. Its pathway is amino-acid biosynthesis; L-leucine biosynthesis; L-leucine from 3-methyl-2-oxobutanoate: step 2/4. In terms of biological role, catalyzes the isomerization between 2-isopropylmalate and 3-isopropylmalate, via the formation of 2-isopropylmaleate. This is 3-isopropylmalate dehydratase large subunit from Sorangium cellulosum (strain So ce56) (Polyangium cellulosum (strain So ce56)).